Reading from the N-terminus, the 484-residue chain is Pre-glycoprotein polyprotein GP complex (484 aa).

A lipid anchor (N-myristoyl glycine; by host) is attached at Gly-2. Residues 2–17 (GQLVSFFQEIPNIIQE) lie on the Extracellular side of the membrane. Residues 18 to 33 (AINIALIAVSLIAILK) traverse the membrane as a helical segment. The Cytoplasmic portion of the chain corresponds to 34-58 (GLVNLWKSGLFQLLVFLILAGRSCS). Cys-57 provides a ligand contact to Zn(2+). At 59–423 (FKIGRSTELQ…QGKTPITLVD (365 aa)) the chain is on the extracellular side. Disulfide bonds link Cys-85/Cys-225, Cys-270/Cys-283, Cys-292/Cys-301, and Cys-355/Cys-376. 4 N-linked (GlcNAc...) asparagine; by host glycosylation sites follow: Asn-88, Asn-125, Asn-178, and Asn-218. N-linked (GlcNAc...) asparagine; by host glycosylation is found at Asn-356, Asn-364, Asn-381, and Asn-386. The helical transmembrane segment at 424 to 444 (ICFWSTLFFTTTLFLHLVGFP) threads the bilayer. At 445-484 (THRHIQGEPCPLPHKLNSNGGCRCGRYPELKKPTTWHRKH) the chain is on the cytoplasmic side. His-446, His-448, Cys-454, His-458, Cys-466, Cys-468, and His-484 together coordinate Zn(2+).

This sequence belongs to the arenaviridae GPC protein family. As to quaternary structure, interacts with glycoprotein G2. Part of the GP complex (GP-C) together with glycoprotein G1 and glycoprotein G2. The GP-complex interacts with protein Z, which interacts with ribonucleocapsid; these interactions may induce virion budding. In terms of assembly, homotrimer; disulfide-linked. In pre-fusion state, G1 homotrimers bind G2 homotrimers via ionic interactions. Part of the GP complex (GP-C) together with glycoprotein G2 and the stable signal peptide. The GP-complex interacts with protein Z, which interacts with ribonucleocapsid; these interactions may induce virion budding. Homotrimer. Interacts with the stable signal peptide. In pre-fusion state, G2 homotrimers bind G1 homotrimers via ionic interactions. Part of the GP complex (GP-C) together with glycoprotein G1 and the stable signal peptide. Acidification in the endosome triggers rearrangements, which ultimately leads to a 6 helix bundle formed by the two heptad repeat domains (HR1 and HR2) in post-fusion state. The GP-complex interacts with protein Z, which interacts with ribonucleocapsid; these interactions may induce virion budding. Specific enzymatic cleavages in vivo yield mature proteins. GP-C polyprotein is cleaved in the endoplasmic reticulum by the host protease MBTPS1. Only cleaved glycoprotein is incorporated into virions. Post-translationally, the SSP remains stably associated with the GP complex following cleavage by signal peptidase and plays crucial roles in the trafficking of GP through the secretory pathway. In terms of processing, myristoylation is necessary for GP2-mediated fusion activity.

Its subcellular location is the virion membrane. The protein localises to the host endoplasmic reticulum membrane. The protein resides in the host Golgi apparatus membrane. It localises to the host cell membrane. Its function is as follows. Functions as a cleaved signal peptide that is retained as the third component of the GP complex (GP-C). Helps to stabilize the spike complex in its native conformation. The SSP is required for efficient glycoprotein expression, post-translational maturation cleavage of G1 and G2, glycoprotein transport to the cell surface plasma membrane, formation of infectious virus particles, and acid pH-dependent glycoprotein-mediated cell fusion. Functionally, glycoprotein G1: Forms the virion spikes together with glycoprotein G2. The glycoprotein spike trimers are connected to the underlying matrix. Interacts with the host receptor leading to virus endocytosis. In terms of biological role, forms the virion spikes together with glycoprotein G1. The glycoprotein spike trimers are connected to the underlying matrix. Class I viral fusion protein that directs fusion of viral and host endosomal membranes, leading to delivery of the nucleocapsid into the cytoplasm. Membrane fusion is mediated by irreversible conformational changes induced by acidification. This is Pre-glycoprotein polyprotein GP complex from Chapare mammarenavirus (isolate Human/Bolivia/810419/2003).